The primary structure comprises 849 residues: Probable ubiquitin carboxyl-terminal hydrolase 1 (849 aa).

The DUSP domain occupies 20-120; sequence QPASLPFQDS…EGLAIERKVL (101 aa). A USP domain is found at 279 to 848; it reads CGLYNLGNSC…SAYVLFYRAK (570 aa). Cysteine 288 acts as the Nucleophile in catalysis. The active-site Proton acceptor is histidine 806.

Belongs to the peptidase C19 family.

It catalyses the reaction Thiol-dependent hydrolysis of ester, thioester, amide, peptide and isopeptide bonds formed by the C-terminal Gly of ubiquitin (a 76-residue protein attached to proteins as an intracellular targeting signal).. The protein is Probable ubiquitin carboxyl-terminal hydrolase 1 (ubp1) of Schizosaccharomyces pombe (strain 972 / ATCC 24843) (Fission yeast).